Consider the following 211-residue polypeptide: MQAPHKEHLYKLLVIGDLGVGKTSIIKRYVHQNFSSHYRATIGVDFALKVLHWDPETVVRLQLWDIAGQERFGNMTRVYYREAMGAFIVFDVTRPATFEAVAKWKNDLDSKLSLPNGKPVSVVLLANKCDQGKDVLMNNGLKMDQFCKEHGFVGWFETSAKENINIDEASRCLVKHILANECDLMESIEPDVVKPHLTSTKVASCSGCAKS.

GTP contacts are provided by glycine 19, valine 20, glycine 21, lysine 22, threonine 23, serine 24, serine 35, serine 36, tyrosine 38, and threonine 41. Mg(2+) is bound at residue threonine 23. Positions 32–46 match the Switch 1 motif; the sequence is QNFSSHYRATIGVDF. 2 residues coordinate Mg(2+): threonine 41 and aspartate 65. GTP-binding residues include glycine 68, lysine 128, aspartate 130, alanine 160, and lysine 161. The short motif at 68–81 is the Switch 2 element; it reads GQERFGNMTRVYYR. Cysteine 205 carries S-palmitoyl cysteine lipidation. A lipid anchor (S-geranylgeranyl cysteine) is attached at cysteine 208.

Belongs to the small GTPase superfamily. Rab family. In terms of assembly, interacts with ANKRD27. It depends on Mg(2+) as a cofactor. In terms of processing, although at least one in vitro system can process and methylate the prenylated C-terminal, in an in vitro system that normally express Rab-38 and in vivo the prenylated C-terminal is not proteolytically processed and not methylated. Expressed in melanocytes.

It is found in the cell membrane. It localises to the melanosome. Its subcellular location is the cytoplasmic vesicle. The protein localises to the phagosome. The protein resides in the phagosome membrane. It is found in the melanosome membrane. The catalysed reaction is GTP + H2O = GDP + phosphate + H(+). Its activity is regulated as follows. Regulated by guanine nucleotide exchange factors (GEFs) including the BLOC-3 complex composed of HPS1 and HPS4 which promote the exchange of bound GDP for free GTP. Regulated by GTPase activating proteins (GAPs) including SGSM2 which increase the GTP hydrolysis activity. Inhibited by GDP dissociation inhibitors (GDIs). Its function is as follows. The small GTPases Rab are key regulators of intracellular membrane trafficking, from the formation of transport vesicles to their fusion with membranes. Rabs cycle between an inactive GDP-bound form and an active GTP-bound form that is able to recruit to membranes different sets of downstream effectors directly responsible for vesicle formation, movement, tethering and fusion. RAB38 may be involved in melanosomal transport and docking. Involved in the proper sorting of TYRP1. Involved in peripheral melanosomal distribution of TYRP1 in melanocytes; the function, which probably is implicating vesicle-trafficking, includes cooperation with ANKRD27 and VAMP7. Plays a role in the maturation of phagosomes that engulf pathogens, such as S.aureus and M.tuberculosis. Plays an important role in the control of melanin production and melanosome biogenesis. In concert with RAB32, regulates the proper trafficking of melanogenic enzymes TYR, TYRP1 and DCT/TYRP2 to melanosomes in melanocytes. This is Ras-related protein Rab-38 from Homo sapiens (Human).